The following is a 156-amino-acid chain: Small ribosomal subunit protein uS7 (156 aa).

Belongs to the universal ribosomal protein uS7 family. Part of the 30S ribosomal subunit. Contacts proteins S9 and S11.

Its function is as follows. One of the primary rRNA binding proteins, it binds directly to 16S rRNA where it nucleates assembly of the head domain of the 30S subunit. Is located at the subunit interface close to the decoding center, probably blocks exit of the E-site tRNA. This is Small ribosomal subunit protein uS7 from Synechococcus sp. (strain CC9311).